The following is a 271-amino-acid chain: tRNA pseudouridine synthase A (271 aa).

Catalysis depends on aspartate 51, which acts as the Nucleophile. Tyrosine 109 lines the substrate pocket.

Belongs to the tRNA pseudouridine synthase TruA family. In terms of assembly, homodimer.

It carries out the reaction uridine(38/39/40) in tRNA = pseudouridine(38/39/40) in tRNA. In terms of biological role, formation of pseudouridine at positions 38, 39 and 40 in the anticodon stem and loop of transfer RNAs. The chain is tRNA pseudouridine synthase A from Methylococcus capsulatus (strain ATCC 33009 / NCIMB 11132 / Bath).